Consider the following 134-residue polypeptide: Probable histone H2A.3 (134 aa).

It belongs to the histone H2A family. The nucleosome is a histone octamer containing two molecules each of H2A, H2B, H3 and H4 assembled in one H3-H4 heterotetramer and two H2A-H2B heterodimers. The octamer wraps approximately 147 bp of DNA.

It is found in the nucleus. Its subcellular location is the chromosome. Its function is as follows. Core component of nucleosome. Nucleosomes wrap and compact DNA into chromatin, limiting DNA accessibility to the cellular machineries which require DNA as a template. Histones thereby play a central role in transcription regulation, DNA repair, DNA replication and chromosomal stability. DNA accessibility is regulated via a complex set of post-translational modifications of histones, also called histone code, and nucleosome remodeling. In Oryza sativa subsp. indica (Rice), this protein is Probable histone H2A.3.